The sequence spans 198 residues: Glycerol-3-phosphate acyltransferase (198 aa).

5 helical membrane passes run 2 to 22, 53 to 75, 79 to 98, 113 to 133, and 147 to 167; these read FITYLLLIVAYLLGSIPFALV, AGFIVTIADILKGTLATGLPLIF, IHPLLFGLAAVLGHVYPIFA, LLCYAPIIFAILAVVFFTLLF, and IAAVIASIVNGDKIFIVAMCL.

Belongs to the PlsY family. As to quaternary structure, probably interacts with PlsX.

Its subcellular location is the cell membrane. The catalysed reaction is an acyl phosphate + sn-glycerol 3-phosphate = a 1-acyl-sn-glycero-3-phosphate + phosphate. It participates in lipid metabolism; phospholipid metabolism. Functionally, catalyzes the transfer of an acyl group from acyl-phosphate (acyl-PO(4)) to glycerol-3-phosphate (G3P) to form lysophosphatidic acid (LPA). This enzyme utilizes acyl-phosphate as fatty acyl donor, but not acyl-CoA or acyl-ACP. The polypeptide is Glycerol-3-phosphate acyltransferase (Bacillus cytotoxicus (strain DSM 22905 / CIP 110041 / 391-98 / NVH 391-98)).